The primary structure comprises 657 residues: 1-deoxy-D-xylulose-5-phosphate synthase (657 aa).

Thiamine diphosphate contacts are provided by residues His-73 and 113–115; that span reads SHA. Asp-145 is a Mg(2+) binding site. Residues 146 to 147, Asn-175, Tyr-293, and Glu-375 each bind thiamine diphosphate; that span reads GA. Asn-175 is a binding site for Mg(2+).

Belongs to the transketolase family. DXPS subfamily. Homodimer. The cofactor is Mg(2+). Requires thiamine diphosphate as cofactor.

The catalysed reaction is D-glyceraldehyde 3-phosphate + pyruvate + H(+) = 1-deoxy-D-xylulose 5-phosphate + CO2. Its pathway is metabolic intermediate biosynthesis; 1-deoxy-D-xylulose 5-phosphate biosynthesis; 1-deoxy-D-xylulose 5-phosphate from D-glyceraldehyde 3-phosphate and pyruvate: step 1/1. In terms of biological role, catalyzes the acyloin condensation reaction between C atoms 2 and 3 of pyruvate and glyceraldehyde 3-phosphate to yield 1-deoxy-D-xylulose-5-phosphate (DXP). The chain is 1-deoxy-D-xylulose-5-phosphate synthase from Renibacterium salmoninarum (strain ATCC 33209 / DSM 20767 / JCM 11484 / NBRC 15589 / NCIMB 2235).